A 326-amino-acid polypeptide reads, in one-letter code: Dipeptide transport ATP-binding protein DppD (326 aa).

An ABC transporter domain is found at isoleucine 5–isoleucine 255. Residues alanine 44–threonine 49, asparagine 61, and glutamine 97 each bind ATP. [4Fe-4S] cluster is bound by residues cysteine 285, cysteine 291, cysteine 298, and cysteine 316.

Belongs to the ABC transporter superfamily.

The protein resides in the cell membrane. The catalysed reaction is a dipeptide(out) + ATP + H2O = a dipeptide(in) + ADP + phosphate + H(+). With respect to regulation, the C-terminal iron-sulfur cluster may stabilize the structure of the C-terminal loops and may function in the regulation of the transport process. Functionally, part of the ABC transporter Dpp involved in dipeptide transport. Responsible for energy coupling to the transport system. The polypeptide is Dipeptide transport ATP-binding protein DppD (Caldanaerobacter subterraneus subsp. tengcongensis (strain DSM 15242 / JCM 11007 / NBRC 100824 / MB4) (Thermoanaerobacter tengcongensis)).